The following is a 282-amino-acid chain: S-formylglutathione hydrolase (282 aa).

Residue A2 is modified to N-acetylalanine. Position 4 is an N6-succinyllysine (K4). Active-site charge relay system residues include S149, D226, and H260.

The protein belongs to the esterase D family. In terms of assembly, homodimer.

It localises to the cytoplasm. The protein localises to the cytoplasmic vesicle. The catalysed reaction is S-formylglutathione + H2O = formate + glutathione + H(+). In terms of biological role, serine hydrolase involved in the detoxification of formaldehyde. The chain is S-formylglutathione hydrolase (ESD) from Bos taurus (Bovine).